A 157-amino-acid chain; its full sequence is Ribosome maturation factor RimP (157 aa).

The protein belongs to the RimP family.

It localises to the cytoplasm. In terms of biological role, required for maturation of 30S ribosomal subunits. The chain is Ribosome maturation factor RimP from Ligilactobacillus salivarius (strain UCC118) (Lactobacillus salivarius).